The primary structure comprises 294 residues: Glycine-rich protein 2 (294 aa).

Residues 1-20 (MKMWFRLATFVTLIIEFAHC) form the signal peptide. A compositionally biased stretch (low complexity) spans 205–221 (TGSQTGAAANGTSAGAA). A disordered region spans residues 205–225 (TGSQTGAAANGTSAGAAVRGG).

Nacreous layer of shell (at protein level). Expressed primarily in the mantle with highest level in the mantle pallium and lower level in the mantle edge.

It is found in the secreted. The polypeptide is Glycine-rich protein 2 (Pinctada maxima (Silver-lipped pearl oyster)).